The sequence spans 686 residues: Envelope glycoprotein H (686 aa).

The first 24 residues, 1–24, serve as a signal peptide directing secretion; sequence MPASSVRLPLRLLTLAGLLALAGA. The Virion surface portion of the chain corresponds to 25–646; it reads AALARGAPQG…TSTRLAPVSP (622 aa). 5 N-linked (GlcNAc...) asparagine; by host glycosylation sites follow: N77, N162, N542, N604, and N627. An interaction with gL region spans residues 157 to 217; the sequence is PAAVFNVTLG…PPAGRFHVYT (61 aa). The chain crosses the membrane as a helical span at residues 647–667; sequence AYVVASVVGAAITVGILYALF. Residues 668-686 are Intravirion-facing; the sequence is KMLCSFSSEGYSRLINARS.

The protein belongs to the herpesviridae glycoprotein H family. As to quaternary structure, interacts with glycoprotein L (gL); this interaction is necessary for the correct processing and cell surface expression of gH. The heterodimer gH/gL seems to interact with gB trimers during fusion. N-glycosylated, O-glycosylated, and sialylated.

It localises to the virion membrane. It is found in the host cell membrane. The protein resides in the host endosome membrane. The heterodimer glycoprotein H-glycoprotein L is required for the fusion of viral and plasma membranes leading to virus entry into the host cell. Following initial binding to host receptor, membrane fusion is mediated by the fusion machinery composed of gB and the heterodimer gH/gL. May also be involved in the fusion between the virion envelope and the outer nuclear membrane during virion morphogenesis. In Sus scrofa (Pig), this protein is Envelope glycoprotein H.